The sequence spans 845 residues: Taste receptor type 1 member 3 (845 aa).

A signal peptide spans 1–18; that stretch reads MAGLMLLSLMALLGLGAG. Residues 19–568 are Extracellular-facing; the sequence is APLCLSRQLR…FLAWGQPAVL (550 aa). N-linked (GlcNAc...) asparagine glycosylation is found at asparagine 128 and asparagine 262. The chain crosses the membrane as a helical span at residues 569–589; it reads VLLILLALALGLVLVALGLFI. Residues 590–601 lie on the Cytoplasmic side of the membrane; the sequence is RHRDSPLVQASG. Residues 602–622 traverse the membrane as a helical segment; sequence GPRACFGLACLGLVCLSVLLF. Topologically, residues 623–637 are extracellular; that stretch reads PGQPGPASCLAQQPL. The helical transmembrane segment at 638-658 threads the bilayer; it reads LHLPLTGCLSTLFLQAAQIFV. Topologically, residues 659–680 are cytoplasmic; sequence GSELPSSWADQLRRCLQGPWAW. Residues 681 to 701 form a helical membrane-spanning segment; sequence LLVLLALLAEAALCAWYLVAF. The Extracellular portion of the chain corresponds to 702 to 727; it reads PPEVVTDWWVLPTQVLVHCRMRSWIS. The chain crosses the membrane as a helical span at residues 728–748; the sequence is FGLLHAINAMLAFLCFLGTFL. Over 749-760 the chain is Cytoplasmic; sequence VQSRPGRYNGAR. Residues 761–781 form a helical membrane-spanning segment; the sequence is GLTFAMLAYFITWISFVPLFA. The Extracellular portion of the chain corresponds to 782–789; it reads NVHVAYQP. Residues 790–810 traverse the membrane as a helical segment; that stretch reads TVQMAAILLCALGILATFHLP. The Cytoplasmic segment spans residues 811–845; that stretch reads KCYLLLQQLELNNPEFFLGDDARGQGSSGSGGKET.

This sequence belongs to the G-protein coupled receptor 3 family. TAS1R subfamily. Forms homodimers or heterodimers with TAS1R1 and TAS1R2.

Its subcellular location is the cell membrane. Its function is as follows. Putative taste receptor. TAS1R1/TAS1R3 responds to the umami taste stimulus (the taste of monosodium glutamate). TAS1R2/TAS1R3 recognizes diverse natural and synthetic sweeteners. TAS1R3 is essential for the recognition and response to the disaccharide trehalose. Sequence differences within and between species can significantly influence the selectivity and specificity of taste responses. In Canis lupus familiaris (Dog), this protein is Taste receptor type 1 member 3 (TAS1R3).